Here is a 192-residue protein sequence, read N- to C-terminus: uncharacterized protein (192 aa).

Residues 29-160 (QRQAAVLIPV…PLDVYRRGNS (132 aa)) form the Nudix hydrolase domain. The Nudix box signature appears at 67–89 (GAVDSTDASLIAAALREAQEEVA). Residues E83 and E87 each contribute to the Mg(2+) site.

The protein belongs to the Nudix hydrolase family. PCD1 subfamily. Requires Mn(2+) as cofactor. Mg(2+) serves as cofactor.

Functionally, probably mediates the hydrolysis of some nucleoside diphosphate derivatives. This is an uncharacterized protein from Salmonella newport (strain SL254).